The chain runs to 455 residues: Probable glycine dehydrogenase (decarboxylating) subunit 1 (455 aa).

It belongs to the GcvP family. N-terminal subunit subfamily. As to quaternary structure, the glycine cleavage system is composed of four proteins: P, T, L and H. In this organism, the P 'protein' is a heterodimer of two subunits.

The catalysed reaction is N(6)-[(R)-lipoyl]-L-lysyl-[glycine-cleavage complex H protein] + glycine + H(+) = N(6)-[(R)-S(8)-aminomethyldihydrolipoyl]-L-lysyl-[glycine-cleavage complex H protein] + CO2. The glycine cleavage system catalyzes the degradation of glycine. The P protein binds the alpha-amino group of glycine through its pyridoxal phosphate cofactor; CO(2) is released and the remaining methylamine moiety is then transferred to the lipoamide cofactor of the H protein. The chain is Probable glycine dehydrogenase (decarboxylating) subunit 1 from Saccharolobus islandicus (strain Y.G.57.14 / Yellowstone #1) (Sulfolobus islandicus).